A 194-amino-acid polypeptide reads, in one-letter code: Thymidine kinase (194 aa).

Residues 9 to 16 and 85 to 88 each bind ATP; these read GAMNSGKT and DECQ. The active-site Proton acceptor is the E86. Residues C143, C146, C180, and H183 each coordinate Zn(2+).

The protein belongs to the thymidine kinase family. In terms of assembly, homotetramer.

The protein resides in the cytoplasm. The enzyme catalyses thymidine + ATP = dTMP + ADP + H(+). This chain is Thymidine kinase, found in Enterococcus faecalis (strain ATCC 700802 / V583).